A 229-amino-acid polypeptide reads, in one-letter code: Ion-translocating oxidoreductase complex subunit E (229 aa).

A run of 5 helical transmembrane segments spans residues 58 to 78, 82 to 102, 105 to 125, 147 to 167, and 201 to 221; these read LGLG…ISLF, IPHD…VTTI, LMNA…PLIV, AFDG…LGAI, and GLLL…ILAV.

The protein belongs to the NqrDE/RnfAE family. In terms of assembly, the complex is composed of six subunits: RnfA, RnfB, RnfC, RnfD, RnfE and RnfG.

The protein localises to the cell inner membrane. Functionally, part of a membrane-bound complex that couples electron transfer with translocation of ions across the membrane. This is Ion-translocating oxidoreductase complex subunit E from Glaesserella parasuis serovar 5 (strain SH0165) (Haemophilus parasuis).